Consider the following 40-residue polypeptide: Dihydrolipoyl dehydrogenase (40 aa).

36–40 (EKRGT) contacts FAD.

This sequence belongs to the class-I pyridine nucleotide-disulfide oxidoreductase family. Homodimer. It depends on FAD as a cofactor.

The protein localises to the mitochondrion matrix. The catalysed reaction is N(6)-[(R)-dihydrolipoyl]-L-lysyl-[protein] + NAD(+) = N(6)-[(R)-lipoyl]-L-lysyl-[protein] + NADH + H(+). Its function is as follows. Lipoamide dehydrogenase is a component of the glycine cleavage system as well as of the alpha-ketoacid dehydrogenase complexes. The pyruvate dehydrogenase complex contains multiple copies of three enzymatic components: pyruvate dehydrogenase (E1), dihydrolipoamide acetyltransferase (E2) and lipoamide dehydrogenase (E3). The sequence is that of Dihydrolipoyl dehydrogenase from Solanum tuberosum (Potato).